Reading from the N-terminus, the 100-residue chain is Large ribosomal subunit protein bL28 (100 aa).

It belongs to the bacterial ribosomal protein bL28 family.

The polypeptide is Large ribosomal subunit protein bL28 (Ehrlichia ruminantium (strain Gardel)).